The chain runs to 253 residues: E3 ubiquitin-protein ligase MARCHF3 (253 aa).

The RING-CH-type zinc finger occupies 63 to 123; it reads SPFNDRPMCR…ELCHFRFAVE (61 aa). Residues C71, C74, C87, C89, H97, C100, C113, and C116 each contribute to the Zn(2+) site. 2 helical membrane passes run 145–165 and 182–202; these read LFGD…SGWL and AVGL…WTLV. A phosphoserine mark is found at S237 and S243.

As to quaternary structure, interacts with MARCHF2 and STX6. In terms of tissue distribution, expressed predominantly in lung, colon and spleen. Present in liver (at protein level).

It localises to the cytoplasmic vesicle membrane. The protein localises to the early endosome membrane. It catalyses the reaction S-ubiquitinyl-[E2 ubiquitin-conjugating enzyme]-L-cysteine + [acceptor protein]-L-lysine = [E2 ubiquitin-conjugating enzyme]-L-cysteine + N(6)-ubiquitinyl-[acceptor protein]-L-lysine.. It participates in protein modification; protein ubiquitination. E3 ubiquitin-protein ligase which may be involved in endosomal trafficking. E3 ubiquitin ligases accept ubiquitin from an E2 ubiquitin-conjugating enzyme in the form of a thioester and then directly transfer the ubiquitin to targeted substrates. The polypeptide is E3 ubiquitin-protein ligase MARCHF3 (Marchf3) (Rattus norvegicus (Rat)).